The chain runs to 96 residues: uncharacterized protein (96 aa).

In terms of domain architecture, CBS spans 57–96 (MTKKVRTTKKDASISDAAALMDKHNVNRLPVVDENNKLVL).

This is an uncharacterized protein from Methanobacterium ivanovii.